Here is a 511-residue protein sequence, read N- to C-terminus: Bifunctional purine biosynthesis protein PurH (511 aa).

Positions 1–145 constitute an MGS-like domain; it reads MKKRALVSVS…KNHKFVSVIV (145 aa).

The protein belongs to the PurH family.

The catalysed reaction is (6R)-10-formyltetrahydrofolate + 5-amino-1-(5-phospho-beta-D-ribosyl)imidazole-4-carboxamide = 5-formamido-1-(5-phospho-D-ribosyl)imidazole-4-carboxamide + (6S)-5,6,7,8-tetrahydrofolate. It carries out the reaction IMP + H2O = 5-formamido-1-(5-phospho-D-ribosyl)imidazole-4-carboxamide. It functions in the pathway purine metabolism; IMP biosynthesis via de novo pathway; 5-formamido-1-(5-phospho-D-ribosyl)imidazole-4-carboxamide from 5-amino-1-(5-phospho-D-ribosyl)imidazole-4-carboxamide (10-formyl THF route): step 1/1. It participates in purine metabolism; IMP biosynthesis via de novo pathway; IMP from 5-formamido-1-(5-phospho-D-ribosyl)imidazole-4-carboxamide: step 1/1. The sequence is that of Bifunctional purine biosynthesis protein PurH from Bacillus cereus (strain 03BB102).